Here is a 301-residue protein sequence, read N- to C-terminus: Sulfate adenylyltransferase subunit 2 (301 aa).

Residues 278 to 301 are disordered; it reads ERQGRLIDGDEPASMERKKREGYF.

It belongs to the PAPS reductase family. CysD subfamily. Sulfate-activating enzymes, NodP and NodQ, may be physically associated.

The enzyme catalyses sulfate + ATP + H(+) = adenosine 5'-phosphosulfate + diphosphate. Proposed to provide activated sulfate for transfer to nod factor. This chain is Sulfate adenylyltransferase subunit 2 (nodP), found in Azospirillum brasilense.